Consider the following 159-residue polypeptide: Protein-export protein SecB (159 aa).

This sequence belongs to the SecB family. As to quaternary structure, homotetramer, a dimer of dimers. One homotetramer interacts with 1 SecA dimer.

The protein localises to the cytoplasm. Functionally, one of the proteins required for the normal export of preproteins out of the cell cytoplasm. It is a molecular chaperone that binds to a subset of precursor proteins, maintaining them in a translocation-competent state. It also specifically binds to its receptor SecA. The protein is Protein-export protein SecB of Burkholderia mallei (strain NCTC 10229).